Reading from the N-terminus, the 107-residue chain is U-scoloptoxin(19)-Sm1a (107 aa).

The signal sequence occupies residues 1–20 (MRFLVSVAFLLTVSSLLVSG).

This sequence belongs to the scoloptoxin-19 family. In terms of processing, contains 6 disulfide bonds. As to expression, expressed by the venom gland.

It localises to the secreted. This chain is U-scoloptoxin(19)-Sm1a, found in Scolopendra morsitans (Tanzanian blue ringleg centipede).